The sequence spans 47 residues: Conotoxin reg3.11 (47 aa).

Residues 1–31 (DQPVERHAENKRHLIPAVMRAMTMNADRRVQ) constitute a propeptide that is removed on maturation. Intrachain disulfides connect Cys-32–Cys-44, Cys-33–Cys-42, and Cys-38–Cys-45. A propeptide spanning residues 46–47 (YH) is cleaved from the precursor.

This sequence belongs to the conotoxin M superfamily. As to expression, expressed by the venom duct.

It localises to the secreted. The sequence is that of Conotoxin reg3.11 from Conus regius (Crown cone).